Consider the following 277-residue polypeptide: uncharacterized protein (277 aa).

A run of 4 helical transmembrane segments spans residues 37–59 (YLRYAIIPGLVTGVFSFLLLYIW), 63–82 (LIFGLMGSVYGLKVLMPKVI), 214–236 (MLCGVIVVFVLAITFSFGFKTYI), and 246–268 (WITSGIYMTLMCFFFKSFTTYLF).

Its subcellular location is the cell membrane. This is an uncharacterized protein from Bacillus anthracis.